A 132-amino-acid chain; its full sequence is Holo-[acyl-carrier-protein] synthase (132 aa).

Mg(2+) contacts are provided by aspartate 8 and glutamate 62.

The protein belongs to the P-Pant transferase superfamily. AcpS family. The cofactor is Mg(2+).

It is found in the cytoplasm. It carries out the reaction apo-[ACP] + CoA = holo-[ACP] + adenosine 3',5'-bisphosphate + H(+). Functionally, transfers the 4'-phosphopantetheine moiety from coenzyme A to a Ser of acyl-carrier-protein. This Polaromonas sp. (strain JS666 / ATCC BAA-500) protein is Holo-[acyl-carrier-protein] synthase.